Here is a 250-residue protein sequence, read N- to C-terminus: Heme oxygenase 2 (250 aa).

Residue His16 coordinates heme b. The interval 228–250 (QDRPGSTEARSTAGHPITLMVGE) is disordered.

It belongs to the heme oxygenase family. Homodimer.

The catalysed reaction is heme b + 3 reduced [NADPH--hemoprotein reductase] + 3 O2 = biliverdin IXalpha + CO + Fe(2+) + 3 oxidized [NADPH--hemoprotein reductase] + 3 H2O + H(+). Its function is as follows. Catalyzes the opening of the heme ring with the release of iron. Key enzyme in the synthesis of the chromophoric part of the photosynthetic antennae. In Synechocystis sp. (strain ATCC 27184 / PCC 6803 / Kazusa), this protein is Heme oxygenase 2 (pbsA2).